A 366-amino-acid chain; its full sequence is tRNA/tmRNA (uracil-C(5))-methyltransferase (366 aa).

Residues glutamine 190, tyrosine 218, asparagine 223, glutamate 239, and aspartate 299 each contribute to the S-adenosyl-L-methionine site. The active-site Nucleophile is the cysteine 324. Catalysis depends on glutamate 358, which acts as the Proton acceptor.

It belongs to the class I-like SAM-binding methyltransferase superfamily. RNA M5U methyltransferase family. TrmA subfamily.

It catalyses the reaction uridine(54) in tRNA + S-adenosyl-L-methionine = 5-methyluridine(54) in tRNA + S-adenosyl-L-homocysteine + H(+). It carries out the reaction uridine(341) in tmRNA + S-adenosyl-L-methionine = 5-methyluridine(341) in tmRNA + S-adenosyl-L-homocysteine + H(+). Its function is as follows. Dual-specificity methyltransferase that catalyzes the formation of 5-methyluridine at position 54 (m5U54) in all tRNAs, and that of position 341 (m5U341) in tmRNA (transfer-mRNA). The protein is tRNA/tmRNA (uracil-C(5))-methyltransferase of Shigella flexneri serotype 5b (strain 8401).